Reading from the N-terminus, the 502-residue chain is High affinity nitrate transporter 2.5 (502 aa).

The next 12 membrane-spanning stretches (helical) occupy residues 51-71 (WFQF…LPVI), 87-107 (IASV…CDLF), 111-131 (LASA…AGIK), 133-153 (PIGF…FVST), 172-192 (IAAG…PIVF), 208-228 (IAFF…LLFG), 264-284 (WITA…DNII), 300-320 (GIIA…GGIF), 334-354 (LWAW…LGQI), 361-381 (IIVM…TFGV), 393-413 (VSGM…LIFF), and 423-443 (GITL…LIYF). The segment at 477-502 (LHIGSQKFAETSISERGRATTTHPQT) is disordered.

It belongs to the major facilitator superfamily. Nitrate/nitrite porter (TC 2.A.1.8) family. In terms of assembly, oligomeric molecular complex with NRT3.1. Expressed in roots, shoots and seeds. Expressed in leaves. Expressed in root hair zone of the primary root and the lateral roots, but not in the lateral root tip or in older parts of the roots. Detected mainly in the epidermis and the cortex. Expressed in shoots only in higher-order veins.

The protein resides in the cell membrane. Functionally, nitrate transporter involved in the constitutive high-affinity transport system (cHATS) under long-term N starvation conditions. Predominantly expressed in roots of nitrate-deprived plants as a 150 kDa molecular complex with NRT3.1 representing the major contributor to cHATS influx. The principal role of this cHATS is to enable roots previously deprived of nitrate to absorb this ion and initiate induction of nitrate-inducible genes. Not involved in transfer of nitrate from roots to shoots. Contributes to phloem loading of nitrate in shoots during N starvation, but not required for growth and nitrate uptake in young plants. Required for the nitrate uptake-independent plant growth promotion and lateral root response to the rhizospheric Phyllobacterium. Might be involved in the transfer of nitrate from stored pools to cytoplasm. The chain is High affinity nitrate transporter 2.5 (NRT2.5) from Arabidopsis thaliana (Mouse-ear cress).